Here is a 470-residue protein sequence, read N- to C-terminus: Glutamate--tRNA ligase (470 aa).

Positions 9 to 19 (PSPTGFLHVGG) match the 'HIGH' region motif. Positions 236–240 (RLSKR) match the 'KMSKS' region motif. ATP is bound at residue lysine 239.

It belongs to the class-I aminoacyl-tRNA synthetase family. Glutamate--tRNA ligase type 1 subfamily. As to quaternary structure, monomer.

The protein localises to the cytoplasm. The catalysed reaction is tRNA(Glu) + L-glutamate + ATP = L-glutamyl-tRNA(Glu) + AMP + diphosphate. Its function is as follows. Catalyzes the attachment of glutamate to tRNA(Glu) in a two-step reaction: glutamate is first activated by ATP to form Glu-AMP and then transferred to the acceptor end of tRNA(Glu). In Legionella pneumophila subsp. pneumophila (strain Philadelphia 1 / ATCC 33152 / DSM 7513), this protein is Glutamate--tRNA ligase.